The chain runs to 407 residues: Arylacetamide deacetylase-like 4 family member 1 (407 aa).

The Cytoplasmic portion of the chain corresponds to 1–4; that stretch reads MLYL. Residues 5–25 traverse the membrane as a helical; Signal-anchor for type II membrane protein segment; sequence VGFLLATVCLLVLGVNVWVLI. The Lumenal segment spans residues 26 to 407; it reads DHFLTIDVPP…NAVVSYIKDL (382 aa). The Involved in the stabilization of the negatively charged intermediate by the formation of the oxyanion hole motif lies at 119-121; the sequence is HGG. Asparagine 168 carries an N-linked (GlcNAc...) asparagine glycan. Residues serine 193, aspartate 347, and histidine 377 contribute to the active site.

This sequence belongs to the 'GDXG' lipolytic enzyme family.

It is found in the membrane. This Mus musculus (Mouse) protein is Arylacetamide deacetylase-like 4 family member 1.